The sequence spans 260 residues: Flagellar basal-body rod protein FlgG (260 aa).

It belongs to the flagella basal body rod proteins family. As to quaternary structure, the basal body constitutes a major portion of the flagellar organelle and consists of four rings (L,P,S, and M) mounted on a central rod. The rod consists of about 26 subunits of FlgG in the distal portion, and FlgB, FlgC and FlgF are thought to build up the proximal portion of the rod with about 6 subunits each.

It is found in the bacterial flagellum basal body. This Buchnera aphidicola subsp. Schizaphis graminum (strain Sg) protein is Flagellar basal-body rod protein FlgG (flgG).